Here is a 136-residue protein sequence, read N- to C-terminus: Large ribosomal subunit protein uL16 (136 aa).

It belongs to the universal ribosomal protein uL16 family. In terms of assembly, part of the 50S ribosomal subunit.

Its function is as follows. Binds 23S rRNA and is also seen to make contacts with the A and possibly P site tRNAs. In Serratia proteamaculans (strain 568), this protein is Large ribosomal subunit protein uL16.